The following is a 376-amino-acid chain: Putative F-box protein At3g18330 (376 aa).

The 46-residue stretch at 1–46 (MPMPNLPKELVEEILSFVPATYLKRLSATCKPWNRLIHNDKRFARK) folds into the F-box domain.

The chain is Putative F-box protein At3g18330 from Arabidopsis thaliana (Mouse-ear cress).